The chain runs to 286 residues: ATP synthase gamma chain (286 aa).

The protein belongs to the ATPase gamma chain family. F-type ATPases have 2 components, CF(1) - the catalytic core - and CF(0) - the membrane proton channel. CF(1) has five subunits: alpha(3), beta(3), gamma(1), delta(1), epsilon(1). CF(0) has three main subunits: a, b and c.

It is found in the cell inner membrane. Its function is as follows. Produces ATP from ADP in the presence of a proton gradient across the membrane. The gamma chain is believed to be important in regulating ATPase activity and the flow of protons through the CF(0) complex. This chain is ATP synthase gamma chain, found in Shewanella piezotolerans (strain WP3 / JCM 13877).